The sequence spans 316 residues: uncharacterized protein (316 aa).

Belongs to the chlamydial CPn_0441/CT_007/TC_0275 family.

This is an uncharacterized protein from Chlamydia pneumoniae (Chlamydophila pneumoniae).